The following is a 1076-amino-acid chain: DNA-directed RNA polymerase subunit beta (1076 aa).

It belongs to the RNA polymerase beta chain family. In terms of assembly, in plastids the minimal PEP RNA polymerase catalytic core is composed of four subunits: alpha, beta, beta', and beta''. When a (nuclear-encoded) sigma factor is associated with the core the holoenzyme is formed, which can initiate transcription.

The protein localises to the plastid. Its subcellular location is the chloroplast. The enzyme catalyses RNA(n) + a ribonucleoside 5'-triphosphate = RNA(n+1) + diphosphate. DNA-dependent RNA polymerase catalyzes the transcription of DNA into RNA using the four ribonucleoside triphosphates as substrates. This Hordeum vulgare (Barley) protein is DNA-directed RNA polymerase subunit beta.